The chain runs to 788 residues: Endonuclease MutS2 (788 aa).

332–339 provides a ligand contact to ATP; the sequence is GPNTGGKT. Residues 713-788 enclose the Smr domain; sequence VDLRGMDAEE…GTGVTVVEIK (76 aa).

The protein belongs to the DNA mismatch repair MutS family. MutS2 subfamily. In terms of assembly, homodimer. Binds to stalled ribosomes, contacting rRNA.

Endonuclease that is involved in the suppression of homologous recombination and thus may have a key role in the control of bacterial genetic diversity. Functionally, acts as a ribosome collision sensor, splitting the ribosome into its 2 subunits. Detects stalled/collided 70S ribosomes which it binds and splits by an ATP-hydrolysis driven conformational change. Acts upstream of the ribosome quality control system (RQC), a ribosome-associated complex that mediates the extraction of incompletely synthesized nascent chains from stalled ribosomes and their subsequent degradation. Probably generates substrates for RQC. The polypeptide is Endonuclease MutS2 (Clostridium botulinum (strain 657 / Type Ba4)).